The primary structure comprises 323 residues: MFNFANVYQQIAQHPQLQLWLNTLPQQLTDWQAKQHGDLDRWMRNLKKIPVGQPEVIDLKNAVAAHNHQPLAQGEQKKLEAVLKTFHPWRKGPYHLHGIHIDTEWRSDWKWDRLLPHISPLKNRLVLDVGCGNGYHMWRMLGEGAQQVFGIDPSELFLIQFEAVRKLLGDDQRVHLLPLGIEQMPELNAFDTVFSMGVLYHRRSPLDHLLQLKNQLVAGGELILETLVVEGDEHTVLVPFDRYAQMRNVYFFPSALALKVWLEKTGFVDVRIVDENITSLGEQRTTEWMTHNSLPDYVDPQDPSKTIEGYPAPRRAILIAKKP.

Residues Lys-91, Trp-105, Lys-110, Gly-130, 152-154, 181-182, Met-196, Tyr-200, and Arg-315 contribute to the carboxy-S-adenosyl-L-methionine site; these read DPS and IE.

It belongs to the class I-like SAM-binding methyltransferase superfamily. CmoB family. Homotetramer.

It carries out the reaction carboxy-S-adenosyl-L-methionine + 5-hydroxyuridine(34) in tRNA = 5-carboxymethoxyuridine(34) in tRNA + S-adenosyl-L-homocysteine + H(+). Functionally, catalyzes carboxymethyl transfer from carboxy-S-adenosyl-L-methionine (Cx-SAM) to 5-hydroxyuridine (ho5U) to form 5-carboxymethoxyuridine (cmo5U) at position 34 in tRNAs. The protein is tRNA U34 carboxymethyltransferase of Vibrio cholerae serotype O1 (strain ATCC 39541 / Classical Ogawa 395 / O395).